Reading from the N-terminus, the 359-residue chain is Putative nucleotidyltransferase MAB21L1 (359 aa).

A ribonucleoside 5'-triphosphate-binding positions include 23–24 (RK) and 63–66 (YEGL). Glu73 and Glu75 together coordinate Mg(2+). A ribonucleoside 5'-triphosphate-binding positions include Lys248 and 252–255 (SLLK).

This sequence belongs to the mab-21 family. As to quaternary structure, monomer. Homodecamer; composed of 2 back to back homopentamers. The protein may exist as monomer in solution and oiligomerizes upon ligand binding.

The protein localises to the nucleus. Functionally, putative nucleotidyltransferase required for several aspects of embryonic development including normal development of the eye. It is unclear whether it displays nucleotidyltransferase activity in vivo. Binds single-stranded RNA (ssRNA). In Xenopus laevis (African clawed frog), this protein is Putative nucleotidyltransferase MAB21L1 (mab21l1).